The chain runs to 223 residues: Riboflavin kinase (223 aa).

A unknown region spans residues 1-89; the sequence is MHRINALKHL…KHIFCGDEDK (89 aa). The interval 90-223 is riboflavin kinase; sequence VELYGNVITG…IMIEDRSACE (134 aa). 99-104 lines the CDP pocket; sequence GLGEGQ. 2 residues coordinate Mg(2+): threonine 128 and asparagine 130. The FMN site is built by serine 185 and glutamate 193. Position 198–201 (198–201) interacts with CDP; sequence VHLR.

This sequence belongs to the archaeal riboflavin kinase family. Requires Mg(2+) as cofactor.

It carries out the reaction riboflavin + CTP = CDP + FMN + H(+). Its pathway is cofactor biosynthesis; FMN biosynthesis; FMN from riboflavin (CTP route): step 1/1. Functionally, catalyzes the CTP-dependent phosphorylation of riboflavin (vitamin B2) to form flavin mononucleotide (FMN). The chain is Riboflavin kinase (ribK) from Methanococcoides burtonii (strain DSM 6242 / NBRC 107633 / OCM 468 / ACE-M).